The sequence spans 224 residues: UPF0502 protein Psyr_2419 (224 aa).

Belongs to the UPF0502 family.

This Pseudomonas syringae pv. syringae (strain B728a) protein is UPF0502 protein Psyr_2419.